Consider the following 334-residue polypeptide: Phosphate acyltransferase (334 aa).

This sequence belongs to the PlsX family. As to quaternary structure, homodimer. Probably interacts with PlsY.

The protein localises to the cytoplasm. It catalyses the reaction a fatty acyl-[ACP] + phosphate = an acyl phosphate + holo-[ACP]. It participates in lipid metabolism; phospholipid metabolism. Functionally, catalyzes the reversible formation of acyl-phosphate (acyl-PO(4)) from acyl-[acyl-carrier-protein] (acyl-ACP). This enzyme utilizes acyl-ACP as fatty acyl donor, but not acyl-CoA. The protein is Phosphate acyltransferase of Mycoplasmopsis agalactiae (strain NCTC 10123 / CIP 59.7 / PG2) (Mycoplasma agalactiae).